The following is a 491-amino-acid chain: Cobyric acid synthase (491 aa).

The GATase cobBQ-type domain maps to 250–439 (ELNIIVIRLP…LHGIFDNGSW (190 aa)). Cys331 functions as the Nucleophile in the catalytic mechanism. Residue His431 is part of the active site.

It belongs to the CobB/CobQ family. CobQ subfamily.

Its pathway is cofactor biosynthesis; adenosylcobalamin biosynthesis. Functionally, catalyzes amidations at positions B, D, E, and G on adenosylcobyrinic A,C-diamide. NH(2) groups are provided by glutamine, and one molecule of ATP is hydrogenolyzed for each amidation. This is Cobyric acid synthase from Microcystis aeruginosa (strain NIES-843 / IAM M-2473).